The sequence spans 484 residues: Coronin-1B (484 aa).

Ser-2 carries the phosphoserine modification. 5 WD repeats span residues 80-120, 130-170, 174-213, 217-260, and 265-305; these read GHTG…LTSP, GHTK…ELYR, LHPDLIYNVSWNHNGSLFCSACKDKSVRIIDPRRGTLVAE, AHEG…EPMA, and DSSN…PYIH. The tract at residues 404 to 446 is disordered; the sequence is LKVSRRNVLSDSRPASYSRSGASTATAVTDVPSGNLAGAGEAG. Residues 410-430 show a composition bias toward polar residues; that stretch reads NVLSDSRPASYSRSGASTATA. The stretch at 444–482 forms a coiled coil; it reads EAGKLEEVMQELRALRMLVKEQGERISRLEEQLGRMENG.

Belongs to the WD repeat coronin family. Forms homooligomers, but does not form complexes with the other coronins. Interacts with Arp2/3 complex components, including ACTR2, ARPC1B and ARPC2. Binds actin. Post-translationally, phosphorylation on Ser-2 regulates the interaction with the Arp2/3 complex and cell motility in fibroblasts. Phosphorylation does not seem to affect subcellular location. As to expression, ubiquitous.

It is found in the cytoplasm. It localises to the cytoskeleton. Its subcellular location is the stress fiber. Its function is as follows. Regulates leading edge dynamics and cell motility in fibroblasts. May be involved in cytokinesis and signal transduction. The protein is Coronin-1B (Coro1b) of Mus musculus (Mouse).